Reading from the N-terminus, the 415-residue chain is Serine hydroxymethyltransferase (415 aa).

Residues L118 and 122–124 (GHL) contribute to the (6S)-5,6,7,8-tetrahydrofolate site. At K227 the chain carries N6-(pyridoxal phosphate)lysine.

It belongs to the SHMT family. As to quaternary structure, homodimer. Pyridoxal 5'-phosphate serves as cofactor.

It localises to the cytoplasm. It carries out the reaction (6R)-5,10-methylene-5,6,7,8-tetrahydrofolate + glycine + H2O = (6S)-5,6,7,8-tetrahydrofolate + L-serine. It functions in the pathway one-carbon metabolism; tetrahydrofolate interconversion. It participates in amino-acid biosynthesis; glycine biosynthesis; glycine from L-serine: step 1/1. Catalyzes the reversible interconversion of serine and glycine with tetrahydrofolate (THF) serving as the one-carbon carrier. This reaction serves as the major source of one-carbon groups required for the biosynthesis of purines, thymidylate, methionine, and other important biomolecules. Also exhibits THF-independent aldolase activity toward beta-hydroxyamino acids, producing glycine and aldehydes, via a retro-aldol mechanism. The sequence is that of Serine hydroxymethyltransferase from Elusimicrobium minutum (strain Pei191).